Reading from the N-terminus, the 105-residue chain is Flagellar transcriptional regulator FlhD (105 aa).

It belongs to the FlhD family. In terms of assembly, homodimer; disulfide-linked. Forms a heterohexamer composed of two FlhC and four FlhD subunits. Each FlhC binds a FlhD dimer, forming a heterotrimer, and a hexamer assembles by dimerization of two heterotrimers.

Its subcellular location is the cytoplasm. In terms of biological role, functions in complex with FlhC as a master transcriptional regulator that regulates transcription of several flagellar and non-flagellar operons by binding to their promoter region. Activates expression of class 2 flagellar genes, including fliA, which is a flagellum-specific sigma factor that turns on the class 3 genes. Also regulates genes whose products function in a variety of physiological pathways. The sequence is that of Flagellar transcriptional regulator FlhD from Cupriavidus pinatubonensis (strain JMP 134 / LMG 1197) (Cupriavidus necator (strain JMP 134)).